Consider the following 649-residue polypeptide: MSLVHNQTNLNESKFLIERAFSSSSETVPLSKEATYPMPTAYSFSAVRSNSETNIKRENPQGFAKEPIMTSMLHNLTMSTGKGNGNDVNSLAPHDVDVGPYCLLLRNLPKDITLRECYCIFSLATGVSSIELKRDDREPFNDNEKVVVVKFGSLSLVTHYANILNSKSEIFGPSFPFRSHIDVVNEQTQLPVSFQEHVSSGTTNSSPKNYQLSSSAQNEIQNQSFNTISYGKTSSSPLGPSAAKPRPSLLSERSLRFSFNDPFGLETISQRKESVPFLRNSISQHDLSNVTTTPVPAGMPPQKDAGKSLLLLEKDEINESIWNGDELVNDVGNSSFGASLQEPPMSSTPVMEWNASSTANIPLFQLSSQENHQSNLLPPSHHSISQDVPHIQSQPNLNNSGVIHSATSLPHYHLLNQINASTKTQSIQQSVSNVPSNLDLNLQTENGHPQSSAPNGSSIFNNQKVNQGFLVSEQDTSTISRQKECSSTASASAFSKNNETNVAGSTTISQADLSLLAKVPPPANPADQNPPCNTLYVGNLPPDATEQELRQLFSNQQGFRRLSFRNKMNSHGHGNGHGHGPICFVEFEDVSFATRALAELYGSQLPHPRPSLNNKGGIRLSFSKNPLGVRGSNSRSKSGYSFNGSYGKS.

Ser-22 and Ser-206 each carry phosphoserine. 2 disordered regions span residues 196-217 (EHVS…SSAQ) and 228-247 (ISYG…KPRP). Residues 228 to 238 (ISYGKTSSSPL) are compositionally biased toward polar residues. A phosphoserine mark is found at Ser-258 and Ser-283. Disordered regions lie at residues 438–461 (LDLN…SIFN) and 604–649 (QLPH…YGKS). The region spanning 533–625 (NTLYVGNLPP…GGIRLSFSKN (93 aa)) is the RRM domain. The segment covering 631-649 (GSNSRSKSGYSFNGSYGKS) has biased composition (polar residues).

Phosphorylated by PKA in vitro.

The protein localises to the cytoplasm. Its function is as follows. Has a partially redundant function to WHI3, a dosage-dependent modulator of cell size. In Saccharomyces cerevisiae (strain ATCC 204508 / S288c) (Baker's yeast), this protein is Protein WHI4 (WHI4).